The following is a 1625-amino-acid chain: Probable cation-transporting ATPase I (1625 aa).

8 consecutive transmembrane segments (helical) span residues Val148–Ala168, Leu177–Val197, Leu358–Ile378, Ala637–Val657, Trp673–Ala693, Ile778–Val798, Leu968–Leu988, and Ala997–Ala1017. Asp1053 functions as the 4-aspartylphosphate intermediate in the catalytic mechanism. Mg(2+) contacts are provided by Asp1340 and Asp1344. Transmembrane regions (helical) follow at residues Ile1401–Ala1421, Leu1432–Phe1452, and Val1547–Ile1567.

This sequence belongs to the cation transport ATPase (P-type) (TC 3.A.3) family.

Its subcellular location is the cell membrane. The catalysed reaction is ATP + H2O = ADP + phosphate + H(+). This Mycobacterium tuberculosis (strain CDC 1551 / Oshkosh) protein is Probable cation-transporting ATPase I (ctpI).